Reading from the N-terminus, the 229-residue chain is Thymidylate kinase (229 aa).

Residue Gly-9–Ser-16 participates in ATP binding.

It belongs to the thymidylate kinase family.

The catalysed reaction is dTMP + ATP = dTDP + ADP. Its function is as follows. Phosphorylation of dTMP to form dTDP in both de novo and salvage pathways of dTTP synthesis. In Roseiflexus castenholzii (strain DSM 13941 / HLO8), this protein is Thymidylate kinase.